A 117-amino-acid polypeptide reads, in one-letter code: MTMRTSSLLLAAVAVVAIVAGATAATVGSWEPVDINDPHVQELGRWAVAEEDRGVAAGGLTFERVTDGEKQVVAGVNYRLTLEASSSGAKDGRYEAVVYEQDPRSNARKLVSFEPIH.

The signal sequence occupies residues Met1–Ala24. The Cystatin domain maps to Gly28–Ala84. The short motif at Gln71–Gly75 is the Secondary area of contact element.

It belongs to the cystatin family. Phytocystatin subfamily.

Its subcellular location is the secreted. Specific inhibitor of cysteine proteinases. Probably involved in the regulation of endogenous processes and in defense against pests and pathogens. The polypeptide is Putative cysteine proteinase inhibitor 7 (Oryza sativa subsp. japonica (Rice)).